We begin with the raw amino-acid sequence, 567 residues long: Allo-aromadendrene synthase TPS4FN (567 aa).

(2E,6E)-farnesyl diphosphate-binding residues include R282, D319, D323, R462, and D465. Mg(2+)-binding residues include D319 and D323. The DDXXD motif signature appears at 319–323 (DDIYD). The Mg(2+) site is built by D465 and E473.

Belongs to the terpene synthase family. Tpsb subfamily. Mg(2+) serves as cofactor. Requires Mn(2+) as cofactor.

It catalyses the reaction (2E,6E)-farnesyl diphosphate = alpha-humulene + diphosphate. It carries out the reaction (2E,6E)-farnesyl diphosphate = (+)-valencene + diphosphate. The catalysed reaction is (2E)-geranyl diphosphate = beta-myrcene + diphosphate. The enzyme catalyses (2E,6E)-farnesyl diphosphate = allo-aromadendrene + diphosphate. It catalyses the reaction (2E,6E)-farnesyl diphosphate + H2O = palustrol + diphosphate. Its pathway is secondary metabolite biosynthesis; terpenoid biosynthesis. Functionally, involved in sesquiterpene olefins biosynthesis, constituants of cannabinoids and terpenoids-rich resins. Catalyzes mainly the conversion of (2E)-farnesyl diphosphate to allo-aromadendrene, and also produces minor products such as alpha-humulene, valencene and palustrol. Can also use (2E)-geranyl diphosphate as substrate with low efficiency, producing minor amounts of myrcene. This is Allo-aromadendrene synthase TPS4FN from Cannabis sativa (Hemp).